Reading from the N-terminus, the 55-residue chain is Protein CADMIUM TOLERANCE 1 (55 aa).

A helical membrane pass occupies residues 24 to 40 (GCLYACIFTALCCFCCY).

Belongs to the CYSTM1 family. In terms of tissue distribution, expressed in roots and shoots.

The protein localises to the cell membrane. The protein resides in the secreted. Its subcellular location is the cell wall. Its function is as follows. Confers resistance to heavy metal ions (e.g. cadmium (CdCl(2)) and copper (CuCl(2))) by chelating them at the plasma membrane of root cells, thus stopping their entry and reducing their accumulation. Binds to aluminium (Al). The chain is Protein CADMIUM TOLERANCE 1 from Oryza sativa subsp. japonica (Rice).